We begin with the raw amino-acid sequence, 220 residues long: Large ribosomal subunit protein bL9 (220 aa).

Over residues 167–184 (AAAEVEQAEDVAAAEQQD) the composition is skewed to low complexity. Residues 167 to 220 (AAAEVEQAEDVAAAEQQDSSPVDDHADDADGATGGEGRDEGAGDASDGEEMPST) form a disordered region.

The protein belongs to the bacterial ribosomal protein bL9 family.

In terms of biological role, binds to the 23S rRNA. This is Large ribosomal subunit protein bL9 from Anaplasma marginale (strain St. Maries).